Reading from the N-terminus, the 308-residue chain is Porphobilinogen deaminase (308 aa).

Cys-241 carries the post-translational modification S-(dipyrrolylmethanemethyl)cysteine.

This sequence belongs to the HMBS family. In terms of assembly, monomer. It depends on dipyrromethane as a cofactor.

The enzyme catalyses 4 porphobilinogen + H2O = hydroxymethylbilane + 4 NH4(+). It participates in porphyrin-containing compound metabolism; protoporphyrin-IX biosynthesis; coproporphyrinogen-III from 5-aminolevulinate: step 2/4. Tetrapolymerization of the monopyrrole PBG into the hydroxymethylbilane pre-uroporphyrinogen in several discrete steps. The sequence is that of Porphobilinogen deaminase from Staphylococcus epidermidis (strain ATCC 35984 / DSM 28319 / BCRC 17069 / CCUG 31568 / BM 3577 / RP62A).